The sequence spans 226 residues: MSVSVYLLDIEGTVCPISFVKETLFPYFSAKLPSLVKSDDVSIKSVLAQFPQHGDSQALQTHIQSLVSNDVKDPTLKQLQGTVWSQGYTSGEIKAPVYKDAIEFMKRKENVYIYSSGSVQAQKLLFGHVANPDNSGSNESSLDLNPLIKGYFDINTSGKKLESSSYEKIVTQIGVAAEQVLFISDNVKELEAAHAAGVKTLLAIRPGNPPVQENHGFRTVEKFDSL.

Mg(2+) contacts are provided by Asp9 and Glu11. Residues 115–116 and Lys160 contribute to the substrate site; that span reads SS. Asp185 is a Mg(2+) binding site.

Belongs to the HAD-like hydrolase superfamily. MasA/MtnC family. Monomer. Mg(2+) is required as a cofactor.

Its subcellular location is the cytoplasm. It is found in the nucleus. The catalysed reaction is 5-methylsulfanyl-2,3-dioxopentyl phosphate + H2O = 1,2-dihydroxy-5-(methylsulfanyl)pent-1-en-3-one + phosphate. It functions in the pathway amino-acid biosynthesis; L-methionine biosynthesis via salvage pathway; L-methionine from S-methyl-5-thio-alpha-D-ribose 1-phosphate: step 3/6. The protein operates within amino-acid biosynthesis; L-methionine biosynthesis via salvage pathway; L-methionine from S-methyl-5-thio-alpha-D-ribose 1-phosphate: step 4/6. Its function is as follows. Bifunctional enzyme that catalyzes the enolization of 2,3-diketo-5-methylthiopentyl-1-phosphate (DK-MTP-1-P) into the intermediate 2-hydroxy-3-keto-5-methylthiopentenyl-1-phosphate (HK-MTPenyl-1-P), which is then dephosphorylated to form the acireductone 1,2-dihydroxy-3-keto-5-methylthiopentene (DHK-MTPene). This chain is Enolase-phosphatase E1, found in Zygosaccharomyces rouxii (strain ATCC 2623 / CBS 732 / NBRC 1130 / NCYC 568 / NRRL Y-229).